The sequence spans 584 residues: uncharacterized protein (584 aa).

This is an uncharacterized protein from Magallana gigas (Pacific oyster).